Reading from the N-terminus, the 114-residue chain is U17-barytoxin-Tl1d (114 aa).

An N-terminal signal peptide occupies residues 1-20 (MKTIIVFLSLLVLATKFGDA). Positions 21 to 74 (NEGVNQEQMKEVIQNEFREDFLNEMAAMSLLQQLEAIESTLLEKEADRNSRQKR) are excised as a propeptide. Cystine bridges form between C75–C88, C82–C93, and C87–C108.

This sequence belongs to the neurotoxin 14 (magi-1) family. 03 (ICK-30-40) subfamily. As to expression, expressed by the venom gland.

It localises to the secreted. Its function is as follows. Ion channel inhibitor. This Trittame loki (Brush-footed trapdoor spider) protein is U17-barytoxin-Tl1d.